Here is a 380-residue protein sequence, read N- to C-terminus: Glucose-1-phosphate adenylyltransferase (380 aa).

Residues G164, 179-180, and S190 contribute to the alpha-D-glucose 1-phosphate site; that span reads EK.

Belongs to the bacterial/plant glucose-1-phosphate adenylyltransferase family. Homotetramer.

It carries out the reaction alpha-D-glucose 1-phosphate + ATP + H(+) = ADP-alpha-D-glucose + diphosphate. Its pathway is glycan biosynthesis; glycogen biosynthesis. Functionally, involved in the biosynthesis of ADP-glucose, a building block required for the elongation reactions to produce glycogen. Catalyzes the reaction between ATP and alpha-D-glucose 1-phosphate (G1P) to produce pyrophosphate and ADP-Glc. The polypeptide is Glucose-1-phosphate adenylyltransferase (Streptococcus pneumoniae (strain CGSP14)).